The sequence spans 395 residues: MGFLTVLYLSLAALSVTNAAQIMSAPNGAEVVPNGYIVVMKDDTSKQDFASHRVWVSGIHHNITRRGLDGEGVKQTYDFDNLRGYSGIFDKDTIKDISNDPKVAFVEPDAIISQHVVVQQRKAPWGLSRLSNRKGGRNYVFDSTAGAGVWAYVVDSGVDIRHAEFRGRAVWGSNQVDNQNSDGTGHGTHVAGTIAGKTYGIAKKAKVIAVKVLNSEGKGPTSGIIAGINWSINNARQNGMLHKSVINMSLGGSYSAGLNHATAQAIKAGIFVSVSAGNDNINSNNNSPASEKSVCTIAASTEDDGKASFSNWGPAVDLYAPGHNILSARPGGGSQVMSGTSMAAPHACGVAAYLIAKEGIPGSRACLRLKQLSQPTIHNPGPDTTRRLLYNGSGR.

The N-terminal stretch at 1 to 19 (MGFLTVLYLSLAALSVTNA) is a signal peptide. A propeptide spanning residues 20–115 (AQIMSAPNGA…VEPDAIISQH (96 aa)) is cleaved from the precursor. An Inhibitor I9 domain is found at 36–112 (YIVVMKDDTS…VAFVEPDAII (77 aa)). One can recognise a Peptidase S8 domain in the interval 124–395 (PWGLSRLSNR…RRLLYNGSGR (272 aa)). Active-site charge relay system residues include aspartate 155 and histidine 186. Residues asparagine 229 and asparagine 247 are each glycosylated (N-linked (GlcNAc...) asparagine). Serine 341 serves as the catalytic Charge relay system. The tract at residues 374 to 395 (QPTIHNPGPDTTRRLLYNGSGR) is disordered. Asparagine 391 carries N-linked (GlcNAc...) asparagine glycosylation.

The protein belongs to the peptidase S8 family.

Its subcellular location is the secreted. Its function is as follows. Secreted subtilisin-like serine protease with keratinolytic activity that contributes to pathogenicity. This chain is Subtilisin-like protease 5 (SUB5), found in Arthroderma otae (strain ATCC MYA-4605 / CBS 113480) (Microsporum canis).